Consider the following 692-residue polypeptide: Translation initiation factor IF-2 (692 aa).

One can recognise a tr-type G domain in the interval 194–363 (PRPPIVTVMG…LLVAEMEDLK (170 aa)). A G1 region spans residues 203–210 (GHVDHGKT). 203–210 (GHVDHGKT) contacts GTP. Residues 228–232 (GITQH) are G2. A G3 region spans residues 249–252 (DTPG). GTP is bound by residues 249–253 (DTPGH) and 303–306 (NKID). Residues 303-306 (NKID) form a G4 region. The segment at 339–341 (SAK) is G5.

The protein belongs to the TRAFAC class translation factor GTPase superfamily. Classic translation factor GTPase family. IF-2 subfamily.

It localises to the cytoplasm. One of the essential components for the initiation of protein synthesis. Protects formylmethionyl-tRNA from spontaneous hydrolysis and promotes its binding to the 30S ribosomal subunits. Also involved in the hydrolysis of GTP during the formation of the 70S ribosomal complex. This is Translation initiation factor IF-2 from Thermoanaerobacter sp. (strain X514).